A 975-amino-acid chain; its full sequence is MASNNVAQFAAELKMPAGVLLEQLQAAGVQKASEDDALSETDKARLLDHLRKSHGATDGDKRKITLTRRHTSEIKQADATGKARTIQVEVRKKRTFVKRDDVSETGADQAHAQTDEQAEAELKRREEEARREAELLEKQAQELRERQERLEREEAERRAREEAAEAERRRAEEEAAAKRAAAAQAEAAQQAAAAREQAQRAQSEPAEQSAQDEARAAAERAAQREAAKKAEDAAREAADKARAEQEEIRKRREAAEAEARAIREMMNTPRRAQVKAVEPPKPAEPPAAKTAEAKGTLHKPAKPAGEAAAARPAAKKPASGAPAPAAAPAGDRTKKPGTGKSGWQDDAAKRRGIKTRGDSSGGVDRGWRGGPKGRGKHQDSASSFQAPTEPIVREVHVPETISVADLAHKMSIKASEVIKVMMKMGQMVTINQVLDQETAMIVVEELGHRALAAKLDDPEALLVEGEIGSDAEQLPRPPVVTVMGHVDHGKTSLLDYIRRAKVAAGEAGGITQHIGAYHVETPRGVVTFLDTPGHEAFTAMRARGAKATDIVILVVAADDGVMPQTKEAISHAKAGGVPIVVAINKIDKPEANPDRVKQELVAEGVVPEEYGGDSPFVPVSAKTGAGIDDLLENVLLQAEVLELKAPVESPAKGIVIEAKLDKGKGPVATVLVQSGTLSRGDVVLAGTAYGRVRAMLDENGKPTKEAGPSIPVEIQGLSEVPGAGEEVIVLPDERKAREIALFRQGKFRDVKLAKQQAAKLESMLEQMGEGEVQNLPLIIKADVQGSQEALVQSLLKLSTDEVRVQIVHSAVGGISESDVNLATASKAVIIGFNTRADAQARKLAEANGIDIRYYNIIYDAVDEVKAAMSGMLAPEKREVVTGMVEVRQVFKVPKVGTVAGCMVTDGVVKRSSSVRVLRNNVVIFTGELDSLKRFKDDVKEVKQGFECGMSLKNFNDIVEGDQFEVFEVTEVARTL.

Basic and acidic residues-rich tracts occupy residues 48-63 (DHLRKSHGATDGDKRK) and 120-177 (AELK…EAAA). 2 disordered regions span residues 48–85 (DHLRKSHGATDGDKRKITLTRRHTSEIKQADATGKART) and 98–390 (KRDD…PTEP). Low complexity predominate over residues 178 to 211 (KRAAAAQAEAAQQAAAAREQAQRAQSEPAEQSAQ). Basic and acidic residues predominate over residues 212-263 (DEARAAAERAAQREAAKKAEDAAREAADKARAEQEEIRKRREAAEAEARAIR). Positions 302 to 330 (KPAGEAAAARPAAKKPASGAPAPAAAPAG) are enriched in low complexity. The span at 359–372 (SSGGVDRGWRGGPK) shows a compositional bias: gly residues. The tr-type G domain maps to 475-644 (PRPPVVTVMG…LLQAEVLELK (170 aa)). A G1 region spans residues 484-491 (GHVDHGKT). A GTP-binding site is contributed by 484–491 (GHVDHGKT). Residues 509-513 (GITQH) form a G2 region. The tract at residues 530 to 533 (DTPG) is G3. GTP is bound by residues 530-534 (DTPGH) and 584-587 (NKID). A G4 region spans residues 584–587 (NKID). The tract at residues 620 to 622 (SAK) is G5.

Belongs to the TRAFAC class translation factor GTPase superfamily. Classic translation factor GTPase family. IF-2 subfamily.

The protein localises to the cytoplasm. Functionally, one of the essential components for the initiation of protein synthesis. Protects formylmethionyl-tRNA from spontaneous hydrolysis and promotes its binding to the 30S ribosomal subunits. Also involved in the hydrolysis of GTP during the formation of the 70S ribosomal complex. This is Translation initiation factor IF-2 from Burkholderia pseudomallei (strain 1106a).